Consider the following 243-residue polypeptide: tRNA (guanine-N(1)-)-methyltransferase (243 aa).

S-adenosyl-L-methionine contacts are provided by residues Gly108 and 127 to 132 (LGDFVL).

This sequence belongs to the RNA methyltransferase TrmD family. As to quaternary structure, homodimer.

It localises to the cytoplasm. It carries out the reaction guanosine(37) in tRNA + S-adenosyl-L-methionine = N(1)-methylguanosine(37) in tRNA + S-adenosyl-L-homocysteine + H(+). Functionally, specifically methylates guanosine-37 in various tRNAs. This is tRNA (guanine-N(1)-)-methyltransferase from Streptococcus pyogenes serotype M2 (strain MGAS10270).